Consider the following 653-residue polypeptide: Hepatocyte growth factor activator serine protease (653 aa).

Residues 1 to 34 (MGRQAWISSLCPLPRPCPFLLLLLLLVVPRGAQP) form the signal peptide. The segment at 34–98 (PQAGRNHTEP…SSSPPGGQVL (65 aa)) is disordered. Positions 35 to 369 (QAGRNHTEPP…RLTACESLAR (335 aa)) are cleaved as a propeptide — removed in mature form. Residues asparagine 39, asparagine 47, and asparagine 63 are each glycosylated (N-linked (GlcNAc...) asparagine). Residues 47 to 59 (NVTATPVTPTIPV) are compositionally biased toward low complexity. The Fibronectin type-II domain occupies 100–147 (ESGQPCRFPFRYGGRMLHSCTSEGSAYRKWCATTHNYDRDRAWGYCAE). Intrachain disulfides connect cysteine 105–cysteine 130, cysteine 119–cysteine 145, cysteine 161–cysteine 172, cysteine 166–cysteine 183, cysteine 185–cysteine 194, cysteine 199–cysteine 227, cysteine 225–cysteine 234, cysteine 242–cysteine 253, cysteine 247–cysteine 264, cysteine 266–cysteine 275, cysteine 283–cysteine 364, cysteine 304–cysteine 346, cysteine 335–cysteine 359, cysteine 392–cysteine 519, cysteine 430–cysteine 446, cysteine 438–cysteine 508, cysteine 533–cysteine 602, cysteine 565–cysteine 581, and cysteine 592–cysteine 620. The EGF-like 1 domain maps to 157-195 (ILDPCASGPCLNGGTCSSTHDHGSYHCSCPLAFTGKDCG). The Fibronectin type-I domain maps to 197-237 (EKCFDETRYEYFEVGDHWARVSEGHVEQCGCMEGQARCEDT). The EGF-like 2 domain occupies 238–276 (HHTACLSSPCLNGGTCHLIVGTGTSVCTCPLGYAGRFCN). The region spanning 283–364 (CFLGNGTEYR…SWEYCRLTAC (82 aa)) is the Kringle domain. Asparagine 287 carries an N-linked (GlcNAc...) asparagine glycan. One can recognise a Peptidase S1 domain in the interval 406-644 (IIGGSSSLPG…YVDWINDRIR (239 aa)). The active-site Charge relay system is histidine 445. Asparagine 466 carries an N-linked (GlcNAc...) asparagine glycan. Aspartate 495 serves as the catalytic Charge relay system. A glycan (N-linked (GlcNAc...) asparagine) is linked at asparagine 544. Serine 596 serves as the catalytic Charge relay system.

It belongs to the peptidase S1 family. As to quaternary structure, heterodimer of a short chain and a long chain linked by a disulfide bond. In terms of processing, the active form of HGFAC presents in the serum is derived from the COOH-terminal region of the precursor by the cleavage of bonds between Arg-369 and Val-370 and Arg-405 and Ile-406.

It is found in the secreted. Serine protease that hydrolyzes the inactive zymogen hepatocyte growth factor (HGFsc) to an activated disulfide-linked heterodimer, then initiating hepatocyte growth factor receptor signaling pathway. This is Hepatocyte growth factor activator serine protease from Mus musculus (Mouse).